The sequence spans 132 residues: Small ribosomal subunit protein uS8 (132 aa).

Belongs to the universal ribosomal protein uS8 family. In terms of assembly, part of the 30S ribosomal subunit. Contacts proteins S5 and S12.

In terms of biological role, one of the primary rRNA binding proteins, it binds directly to 16S rRNA central domain where it helps coordinate assembly of the platform of the 30S subunit. The chain is Small ribosomal subunit protein uS8 from Streptococcus pyogenes serotype M1.